The following is a 442-amino-acid chain: DNA topoisomerase 6 subunit A3 (442 aa).

Residues 1-34 (MSEKKRRGGAGAGAASGSASKKPRVSTAASYAES) form a disordered region. Residues 91 to 224 (QDSASVTSRI…LHVVASEKGV (134 aa)) form the Topo IIA-type catalytic domain. Tyrosine 185 (O-(5'-phospho-DNA)-tyrosine intermediate) is an active-site residue. Mg(2+)-binding residues include glutamate 271 and aspartate 323.

It belongs to the TOP6A family. Homodimer. Heterotetramer of two TOP6A and two TOP6B subunits. Interacts with TOP6B. Mg(2+) is required as a cofactor. In terms of tissue distribution, highly expressed in flowers before pollination. Expressed in roots and shoots.

It localises to the nucleus. It carries out the reaction ATP-dependent breakage, passage and rejoining of double-stranded DNA.. Its function is as follows. Component of the DNA topoisomerase VI involved in chromatin organization and progression of endoreduplication cycles. Relaxes both positive and negative superturns and exhibits a strong decatenase activity. May be involved in cell proliferation and stress tolerance. This Oryza sativa subsp. indica (Rice) protein is DNA topoisomerase 6 subunit A3.